The primary structure comprises 510 residues: Serine/threonine-protein kinase UL13 homolog (510 aa).

Residues methionine 1 to methionine 63 form a disordered region. In terms of domain architecture, Protein kinase spans arginine 132–arginine 458. ATP is bound by residues alanine 138–valine 146 and lysine 157. Aspartate 257 functions as the Proton acceptor in the catalytic mechanism.

Belongs to the protein kinase superfamily. Ser/Thr protein kinase family. In terms of processing, autophosphorylated.

The protein resides in the virion tegument. Its subcellular location is the host nucleus. The enzyme catalyses L-seryl-[protein] + ATP = O-phospho-L-seryl-[protein] + ADP + H(+). The catalysed reaction is L-threonyl-[protein] + ATP = O-phospho-L-threonyl-[protein] + ADP + H(+). Functionally, multifunctional serine/threonine kinase that plays a role in several processes including egress of virus particles from the nucleus, modulation of the actin cytoskeleton and regulation of viral and cellular gene expression. Regulates the nuclear localization of viral envelopment factor proteins 24 and 27, by phosphorylating the protein kinase ORF66, indicating a role in nuclear egress. Disrupts host nuclear lamins, including LMNA and LMNB1. Phosphorylates the viral Fc receptor composed of glycoproteins E (gE) and I (gI). Phosphorylation of glycoprotein E (gE) by UL13 alters its subcellular localization, from the host early endosome to the plasma membrane. Participates in the transcriptional regulation of cellular and viral mRNAs mainly by phosphorylating the viral transcriptional regulator IE63. This Varicella-zoster virus (strain Dumas) (HHV-3) protein is Serine/threonine-protein kinase UL13 homolog.